The sequence spans 250 residues: 3-deoxy-manno-octulosonate cytidylyltransferase (250 aa).

The protein belongs to the KdsB family.

It localises to the cytoplasm. The catalysed reaction is 3-deoxy-alpha-D-manno-oct-2-ulosonate + CTP = CMP-3-deoxy-beta-D-manno-octulosonate + diphosphate. It participates in nucleotide-sugar biosynthesis; CMP-3-deoxy-D-manno-octulosonate biosynthesis; CMP-3-deoxy-D-manno-octulosonate from 3-deoxy-D-manno-octulosonate and CTP: step 1/1. The protein operates within bacterial outer membrane biogenesis; lipopolysaccharide biosynthesis. Functionally, activates KDO (a required 8-carbon sugar) for incorporation into bacterial lipopolysaccharide in Gram-negative bacteria. The chain is 3-deoxy-manno-octulosonate cytidylyltransferase from Francisella tularensis subsp. tularensis (strain FSC 198).